The sequence spans 227 residues: Cytochrome c oxidase subunit 2 (227 aa).

Residues 1 to 14 (MACPVQLGFQDAAS) are Mitochondrial intermembrane-facing. Residues 15 to 45 (PIMEELTYFHDHTLMIVFLISSLVLYIISLM) traverse the membrane as a helical segment. At 46-59 (LTTELTHTSTMDAQ) the chain is on the mitochondrial matrix side. A helical transmembrane segment spans residues 60–87 (EVETVWTILPAVILILIALPSLRILYMM). The Mitochondrial intermembrane segment spans residues 88–227 (DEITTPSLTL…HFEEWLLAML (140 aa)). Residues H161, C196, E198, C200, H204, and M207 each coordinate Cu cation. Residue E198 coordinates Mg(2+).

This sequence belongs to the cytochrome c oxidase subunit 2 family. In terms of assembly, component of the cytochrome c oxidase (complex IV, CIV), a multisubunit enzyme composed of 14 subunits. The complex is composed of a catalytic core of 3 subunits MT-CO1, MT-CO2 and MT-CO3, encoded in the mitochondrial DNA, and 11 supernumerary subunits COX4I, COX5A, COX5B, COX6A, COX6B, COX6C, COX7A, COX7B, COX7C, COX8 and NDUFA4, which are encoded in the nuclear genome. The complex exists as a monomer or a dimer and forms supercomplexes (SCs) in the inner mitochondrial membrane with NADH-ubiquinone oxidoreductase (complex I, CI) and ubiquinol-cytochrome c oxidoreductase (cytochrome b-c1 complex, complex III, CIII), resulting in different assemblies (supercomplex SCI(1)III(2)IV(1) and megacomplex MCI(2)III(2)IV(2)). Found in a complex with TMEM177, COA6, COX18, COX20, SCO1 and SCO2. Interacts with TMEM177 in a COX20-dependent manner. Interacts with COX20. Interacts with COX16. It depends on Cu cation as a cofactor.

The protein resides in the mitochondrion inner membrane. The enzyme catalyses 4 Fe(II)-[cytochrome c] + O2 + 8 H(+)(in) = 4 Fe(III)-[cytochrome c] + 2 H2O + 4 H(+)(out). Functionally, component of the cytochrome c oxidase, the last enzyme in the mitochondrial electron transport chain which drives oxidative phosphorylation. The respiratory chain contains 3 multisubunit complexes succinate dehydrogenase (complex II, CII), ubiquinol-cytochrome c oxidoreductase (cytochrome b-c1 complex, complex III, CIII) and cytochrome c oxidase (complex IV, CIV), that cooperate to transfer electrons derived from NADH and succinate to molecular oxygen, creating an electrochemical gradient over the inner membrane that drives transmembrane transport and the ATP synthase. Cytochrome c oxidase is the component of the respiratory chain that catalyzes the reduction of oxygen to water. Electrons originating from reduced cytochrome c in the intermembrane space (IMS) are transferred via the dinuclear copper A center (CU(A)) of subunit 2 and heme A of subunit 1 to the active site in subunit 1, a binuclear center (BNC) formed by heme A3 and copper B (CU(B)). The BNC reduces molecular oxygen to 2 water molecules using 4 electrons from cytochrome c in the IMS and 4 protons from the mitochondrial matrix. This chain is Cytochrome c oxidase subunit 2 (MT-CO2), found in Cheirogaleus medius (Fat-tailed dwarf lemur).